We begin with the raw amino-acid sequence, 127 residues long: Small ribosomal subunit protein uS12 (127 aa).

Asp89 carries the post-translational modification 3-methylthioaspartic acid.

The protein belongs to the universal ribosomal protein uS12 family. Part of the 30S ribosomal subunit. Contacts proteins S8 and S17. May interact with IF1 in the 30S initiation complex.

In terms of biological role, with S4 and S5 plays an important role in translational accuracy. Its function is as follows. Interacts with and stabilizes bases of the 16S rRNA that are involved in tRNA selection in the A site and with the mRNA backbone. Located at the interface of the 30S and 50S subunits, it traverses the body of the 30S subunit contacting proteins on the other side and probably holding the rRNA structure together. The combined cluster of proteins S8, S12 and S17 appears to hold together the shoulder and platform of the 30S subunit. The polypeptide is Small ribosomal subunit protein uS12 (Campylobacter lari (strain RM2100 / D67 / ATCC BAA-1060)).